Consider the following 217-residue polypeptide: Putative 8-oxo-dGTP diphosphatase 3 (217 aa).

Residues 30–164 (GRYGAAGLLL…PGFAASWQRL (135 aa)) form the Nudix hydrolase domain. A disordered region spans residues 67–92 (LPGGARDSHETPEQTAVRESSEEAGL). The Mg(2+) site is built by G70, E85, E88, and E89. Positions 70–91 (GARDSHETPEQTAVRESSEEAG) match the Nudix box motif.

This sequence belongs to the Nudix hydrolase family. It depends on Mg(2+) as a cofactor. Mn(2+) serves as cofactor.

It carries out the reaction 8-oxo-dGTP + H2O = 8-oxo-dGMP + diphosphate + H(+). Functionally, may be involved in the GO system responsible for removing an oxidatively damaged form of guanine (7,8-dihydro-8-oxoguanine, 8-oxo-dGTP) from DNA and the nucleotide pool. 8-oxo-dGTP is inserted opposite dA and dC residues of template DNA with almost equal efficiency thus leading to A.T to G.C transversions. MutT specifically degrades 8-oxo-dGTP to the monophosphate. The chain is Putative 8-oxo-dGTP diphosphatase 3 (mutT3) from Mycobacterium tuberculosis (strain CDC 1551 / Oshkosh).